Consider the following 340-residue polypeptide: S-adenosylmethionine:tRNA ribosyltransferase-isomerase (340 aa).

This sequence belongs to the QueA family. As to quaternary structure, monomer.

The protein localises to the cytoplasm. It catalyses the reaction 7-aminomethyl-7-carbaguanosine(34) in tRNA + S-adenosyl-L-methionine = epoxyqueuosine(34) in tRNA + adenine + L-methionine + 2 H(+). It participates in tRNA modification; tRNA-queuosine biosynthesis. Its function is as follows. Transfers and isomerizes the ribose moiety from AdoMet to the 7-aminomethyl group of 7-deazaguanine (preQ1-tRNA) to give epoxyqueuosine (oQ-tRNA). The protein is S-adenosylmethionine:tRNA ribosyltransferase-isomerase of Macrococcus caseolyticus (strain JCSC5402) (Macrococcoides caseolyticum).